Here is an 88-residue protein sequence, read N- to C-terminus: Small ribosomal subunit protein uS17 (88 aa).

This sequence belongs to the universal ribosomal protein uS17 family. Part of the 30S ribosomal subunit.

One of the primary rRNA binding proteins, it binds specifically to the 5'-end of 16S ribosomal RNA. This Prochlorococcus marinus (strain MIT 9215) protein is Small ribosomal subunit protein uS17.